Reading from the N-terminus, the 666-residue chain is Hybrid PKS-NRPS synthetase pytA (666 aa).

Positions 1–340 (MDPQQRLLLE…GTNAHAILEE (340 aa)) constitute a Ketosynthase family 3 (KS3) domain. Catalysis depends on for beta-ketoacyl synthase activity residues Cys-87, His-222, and His-260. Residues 455-665 (VFTGQGAQWF…VFVHSLVIKR (211 aa)) are malonyl-CoA:ACP transacylase (MAT) domain. Ser-548 acts as the For malonyltransferase activity in catalysis.

In the C-terminal section; belongs to the NRP synthetase family.

It functions in the pathway secondary metabolite biosynthesis. Its function is as follows. Hybrid PKS-NRPS synthetase; part of the gene cluster that mediates the biosynthesis of pyranterreones, a family of antioxidative compounds. The first step of pyranonigrins biosynthesis is performed by the hybrid PKS-NRPS synthetase pytA that condenses 4 malonyl-CoA units ato the acetyl starter unit by the modular PKS of pytA. The acyl chain is then connected to an L-serine through the amide bond by the modular NRPS of pytA. A tetramic acid is formed and released from the PKS-NRPS pytA to give pyranterreone 5 with the help of the thioesterase pytI. Pyranterreone 5 could be methylated by pytC to afford pyranterreone 6. Both pyranterreones 5 and 6 are subsequently oxidized by the FAD-linked oxidoreductase pytB and the cytochrome P450 monooxygenase pytD to form the fused gamma-pyrone core, resulting in pyranterreones 7 and 11, respectively. The hydroxy group at C-8 of pyranterreones 7 and 11 are dehydrated by the aspartyl protease pytH to form a delta-7 double bond to give pyranterreones 3 and 1, 2 accordingly. The exo-methylene of pyranterreone 3 could be reduced into a pendant methyl by reductase pytE to provide pyranterreone 4, also known as cordylactam. Pyranterreone 4 can be reconverted to pyranterreone 3 through pytB-catalyzed dehydrogenation or further oxidized to pyranterreones 9 and 10. The chain is Hybrid PKS-NRPS synthetase pytA from Aspergillus terreus (strain NIH 2624 / FGSC A1156).